An 81-amino-acid chain; its full sequence is Protein RALF-like 7 (81 aa).

The N-terminal stretch at Met-1 to Gly-29 is a signal peptide. 2 cysteine pairs are disulfide-bonded: Cys-46-Cys-54 and Cys-66-Cys-72.

It belongs to the plant rapid alkalinization factor (RALF) family.

Its subcellular location is the secreted. In terms of biological role, cell signaling peptide that may regulate plant stress, growth, and development. Mediates a rapid alkalinization of extracellular space by mediating a transient increase in the cytoplasmic Ca(2+) concentration leading to a calcium-dependent signaling events through a cell surface receptor and a concomitant activation of some intracellular mitogen-activated protein kinases. The chain is Protein RALF-like 7 (RALFL7) from Arabidopsis thaliana (Mouse-ear cress).